The chain runs to 512 residues: Acid-sensing ion channel 2 (512 aa).

Over 1–37 the chain is Cytoplasmic; that stretch reads MDLKESPSEGSLQPSSIQIFANTSTLHGIRHIFVYGP. Serine 8 and serine 11 each carry phosphoserine. Residues 38-58 form a helical membrane-spanning segment; that stretch reads LTIRRVLWAVAFVGSLGLLLV. Residues 59–427 lie on the Extracellular side of the membrane; sequence ESSERVSYYF…EQKKAYEVAA (369 aa). 6 disulfides stabilise this stretch: cysteine 92/cysteine 193, cysteine 289/cysteine 364, cysteine 307/cysteine 360, cysteine 311/cysteine 358, cysteine 320/cysteine 342, and cysteine 322/cysteine 334. 2 N-linked (GlcNAc...) asparagine glycosylation sites follow: asparagine 365 and asparagine 392. The helical transmembrane segment at 428–448 threads the bilayer; sequence LLGDIGGQMGLFIGASILTIL. Positions 441–443 match the GAS motif; ion selectivity filter motif; that stretch reads GAS. Over 449-512 the chain is Cytoplasmic; that stretch reads ELFDYIYELI…ALGTLEEIAC (64 aa).

The protein belongs to the amiloride-sensitive sodium channel (TC 1.A.6) family. ASIC2 subfamily. In terms of assembly, can form homotrimers. Heterotrimer; forms functional heterotrimers producing channel with different properties. Forms heterotrimers with ASIC1; while ASIC1 determines current amplitude, ASIC2 influences the properties of the current. Forms heterotrimers with ASIC3; resulting in channels with distinct properties. Interacts with STOM; STOM regulates the gating of ASIC2-containing channels. Interacts with PICK1; promotes ASIC3 phosphorylation by PKC and activation of ASIC2/ASIC3 heterotrimers. Expressed by sensory neurons. Expressed by nociceptive sensory neurons, spiral ganglion (SG) neurons and the retina (at protein level). Expressed in outer nuclear layer of retina (photoreceptors) and to a lower extent in distal and proximal inner nuclear layer.

The protein resides in the cell membrane. It catalyses the reaction Na(+)(in) = Na(+)(out). The enzyme catalyses K(+)(in) = K(+)(out). It carries out the reaction Li(+)(in) = Li(+)(out). With respect to regulation, inhibited by the diuretic drug amiloride. In terms of biological role, forms pH-gated trimeric sodium channels that act as postsynaptic excitatory sensors in the nervous system. Upon extracellular acidification, these channels generate rapid, transient inward currents that fully desensitize. Highly selective for sodium, they are permeable to other cations. By forming heterotrimeric channels with ASIC1, could contribute to synaptic plasticity, learning, and memory. Additionally, as acid sensors at nerve terminals, plays a role in mechanosensation and phototransduction. Its function is as follows. Has no pH-gated sodium channel activity per se but can associate with other ASICs to produce functional channels with specific properties. The sequence is that of Acid-sensing ion channel 2 from Mus musculus (Mouse).